A 180-amino-acid chain; its full sequence is uncharacterized protein (180 aa).

The N-terminal stretch at 1–22 (MKLRFISSALAAALFAATGSYA) is a signal peptide. A disulfide bond links C41 and C81.

This sequence belongs to the fimbrial protein family.

Its subcellular location is the fimbrium. This is an uncharacterized protein from Escherichia coli O157:H7.